The sequence spans 146 residues: uncharacterized protein (146 aa).

Residues 1–137 (MLSQEFFNSF…TINVMNQIHK (137 aa)) form the HTH marR-type domain.

This is an uncharacterized protein from Staphylococcus aureus (strain MW2).